The following is a 107-amino-acid chain: Putative double-stranded DNA mimic protein ECA2319 (107 aa).

This sequence belongs to the putative dsDNA mimic protein family.

May act as a double-stranded DNA (dsDNA) mimic. Probably regulates the activity of a dsDNA-binding protein. The chain is Putative double-stranded DNA mimic protein ECA2319 from Pectobacterium atrosepticum (strain SCRI 1043 / ATCC BAA-672) (Erwinia carotovora subsp. atroseptica).